We begin with the raw amino-acid sequence, 419 residues long: Peptide chain release factor subunit 1 (419 aa).

The protein belongs to the eukaryotic release factor 1 family. As to quaternary structure, heterodimer of two subunits, one of which binds GTP.

Its subcellular location is the cytoplasm. In terms of biological role, directs the termination of nascent peptide synthesis (translation) in response to the termination codons UAA, UAG and UGA. The protein is Peptide chain release factor subunit 1 of Methanococcus maripaludis (strain C7 / ATCC BAA-1331).